A 728-amino-acid polypeptide reads, in one-letter code: 1,4-alpha-glucan branching enzyme GlgB (728 aa).

Catalysis depends on D405, which acts as the Nucleophile. The Proton donor role is filled by E458. The disordered stretch occupies residues 686–712 (YHGSNAGNAGAVQSDEHESHGRPHSLS).

It belongs to the glycosyl hydrolase 13 family. GlgB subfamily. Monomer.

It catalyses the reaction Transfers a segment of a (1-&gt;4)-alpha-D-glucan chain to a primary hydroxy group in a similar glucan chain.. It functions in the pathway glycan biosynthesis; glycogen biosynthesis. Its function is as follows. Catalyzes the formation of the alpha-1,6-glucosidic linkages in glycogen by scission of a 1,4-alpha-linked oligosaccharide from growing alpha-1,4-glucan chains and the subsequent attachment of the oligosaccharide to the alpha-1,6 position. This is 1,4-alpha-glucan branching enzyme GlgB from Enterobacter sp. (strain 638).